The chain runs to 436 residues: 3-ketoacyl-CoA thiolase (436 aa).

Cys99 acts as the Acyl-thioester intermediate in catalysis. Active-site proton acceptor residues include His392 and Cys422.

This sequence belongs to the thiolase-like superfamily. Thiolase family. As to quaternary structure, heterotetramer of two alpha chains (FadJ) and two beta chains (FadI).

It is found in the cytoplasm. The catalysed reaction is an acyl-CoA + acetyl-CoA = a 3-oxoacyl-CoA + CoA. It participates in lipid metabolism; fatty acid beta-oxidation. Its function is as follows. Catalyzes the final step of fatty acid oxidation in which acetyl-CoA is released and the CoA ester of a fatty acid two carbons shorter is formed. The chain is 3-ketoacyl-CoA thiolase from Escherichia coli (strain 55989 / EAEC).